A 237-amino-acid polypeptide reads, in one-letter code: Phosphoribosylaminoimidazole-succinocarboxamide synthase (237 aa).

It belongs to the SAICAR synthetase family.

It carries out the reaction 5-amino-1-(5-phospho-D-ribosyl)imidazole-4-carboxylate + L-aspartate + ATP = (2S)-2-[5-amino-1-(5-phospho-beta-D-ribosyl)imidazole-4-carboxamido]succinate + ADP + phosphate + 2 H(+). It participates in purine metabolism; IMP biosynthesis via de novo pathway; 5-amino-1-(5-phospho-D-ribosyl)imidazole-4-carboxamide from 5-amino-1-(5-phospho-D-ribosyl)imidazole-4-carboxylate: step 1/2. The chain is Phosphoribosylaminoimidazole-succinocarboxamide synthase from Shigella dysenteriae serotype 1 (strain Sd197).